We begin with the raw amino-acid sequence, 441 residues long: uncharacterized protein (441 aa).

12 consecutive transmembrane segments (helical) span residues 21–41 (VVVA…MSLG), 51–71 (LGGG…AVAI), 94–114 (AAST…VTMS), 118–138 (VIPV…GVFA), 150–170 (VLTF…GGIF), 195–215 (AMLL…FVSY), 239–259 (QHIL…LYTG), 260–280 (SMII…VIAW), 291–311 (VHMM…AAVM), 334–354 (LAAL…GSSF), 363–383 (IYVP…ALVG), and 419–439 (VVPT…IAAM).

The protein localises to the cell membrane. This is an uncharacterized protein from Vibrio parahaemolyticus serotype O3:K6 (strain RIMD 2210633).